Consider the following 389-residue polypeptide: Capsule polysaccharide export protein KpsS (389 aa).

The sequence is that of Capsule polysaccharide export protein KpsS (kpsS) from Escherichia coli.